A 328-amino-acid polypeptide reads, in one-letter code: tRNA U34 carboxymethyltransferase (328 aa).

Carboxy-S-adenosyl-L-methionine is bound by residues K91, W105, K110, G130, 152–154 (DPS), M196, Y200, and R315.

Belongs to the class I-like SAM-binding methyltransferase superfamily. CmoB family. Homotetramer.

It carries out the reaction carboxy-S-adenosyl-L-methionine + 5-hydroxyuridine(34) in tRNA = 5-carboxymethoxyuridine(34) in tRNA + S-adenosyl-L-homocysteine + H(+). Catalyzes carboxymethyl transfer from carboxy-S-adenosyl-L-methionine (Cx-SAM) to 5-hydroxyuridine (ho5U) to form 5-carboxymethoxyuridine (cmo5U) at position 34 in tRNAs. This Psychromonas ingrahamii (strain DSM 17664 / CCUG 51855 / 37) protein is tRNA U34 carboxymethyltransferase.